The sequence spans 197 residues: Imidazoleglycerol-phosphate dehydratase (197 aa).

It belongs to the imidazoleglycerol-phosphate dehydratase family.

The protein localises to the cytoplasm. The catalysed reaction is D-erythro-1-(imidazol-4-yl)glycerol 3-phosphate = 3-(imidazol-4-yl)-2-oxopropyl phosphate + H2O. It functions in the pathway amino-acid biosynthesis; L-histidine biosynthesis; L-histidine from 5-phospho-alpha-D-ribose 1-diphosphate: step 6/9. The protein is Imidazoleglycerol-phosphate dehydratase of Rhodopseudomonas palustris (strain TIE-1).